Consider the following 373-residue polypeptide: Probable pectin lyase D (373 aa).

A signal peptide spans 1 to 24 (MKYAAALTAVAALAARAAAVGVSG). 2 cysteine pairs are disulfide-bonded: Cys-82–Cys-101 and Cys-91–Cys-225. N-linked (GlcNAc...) asparagine glycosylation occurs at Asn-128. The active site involves Arg-255. The N-linked (GlcNAc...) asparagine glycan is linked to Asn-274. An intrachain disulfide couples Cys-321 to Cys-329. N-linked (GlcNAc...) asparagine glycosylation is present at Asn-348. Positions 354 to 366 (LPSADAASTSPAS) are enriched in low complexity. Residues 354–373 (LPSADAASTSPASNAGQGNL) form a disordered region.

It belongs to the polysaccharide lyase 1 family.

The protein localises to the secreted. The catalysed reaction is Eliminative cleavage of (1-&gt;4)-alpha-D-galacturonan methyl ester to give oligosaccharides with 4-deoxy-6-O-methyl-alpha-D-galact-4-enuronosyl groups at their non-reducing ends.. Functionally, pectinolytic enzymes consist of four classes of enzymes: pectin lyase, polygalacturonase, pectin methylesterase and rhamnogalacturonase. Among pectinolytic enzymes, pectin lyase is the most important in depolymerization of pectin, since it cleaves internal glycosidic bonds of highly methylated pectins. The polypeptide is Probable pectin lyase D (pelD) (Aspergillus niger (strain ATCC MYA-4892 / CBS 513.88 / FGSC A1513)).